A 137-amino-acid chain; its full sequence is uncharacterized protein (137 aa).

Residues 58-135 (VHVVAKTVRP…EVNLQMFLMN (78 aa)) form the Ubiquitin-like domain.

It is found in the cytoplasm. It localises to the nucleus. This is an uncharacterized protein from Schizosaccharomyces pombe (strain 972 / ATCC 24843) (Fission yeast).